The sequence spans 294 residues: UPF0761 membrane protein YPN_0254 (294 aa).

A run of 7 helical transmembrane segments spans residues 44-64 (LLSL…FPMF), 67-87 (ISIK…GDII), 108-128 (GLIV…NIIW), 136-156 (LVFS…LVGA), 185-205 (VFPL…VPTV), 212-232 (ALIG…GFAM), and 246-266 (VLAV…IVLL).

Belongs to the UPF0761 family.

It localises to the cell inner membrane. This chain is UPF0761 membrane protein YPN_0254, found in Yersinia pestis bv. Antiqua (strain Nepal516).